We begin with the raw amino-acid sequence, 138 residues long: Large ribosomal subunit protein uL16 (138 aa).

Residues 1–13 are compositionally biased toward basic residues; it reads MLQPKRRKYRKEQ. Residues 1-22 are disordered; that stretch reads MLQPKRRKYRKEQKGRNTGVAT.

Belongs to the universal ribosomal protein uL16 family. Part of the 50S ribosomal subunit.

Functionally, binds 23S rRNA and is also seen to make contacts with the A and possibly P site tRNAs. The polypeptide is Large ribosomal subunit protein uL16 (Paraburkholderia phymatum (strain DSM 17167 / CIP 108236 / LMG 21445 / STM815) (Burkholderia phymatum)).